A 622-amino-acid chain; its full sequence is Chaperone protein HscA homolog (622 aa).

This sequence belongs to the heat shock protein 70 family.

Functionally, chaperone involved in the maturation of iron-sulfur cluster-containing proteins. Has a low intrinsic ATPase activity which is markedly stimulated by HscB. This chain is Chaperone protein HscA homolog, found in Burkholderia ambifaria (strain MC40-6).